The following is a 364-amino-acid chain: MKKQDFYFDLPEELIAQDPLEDRSGSRLLVLDKNTGKVTHHIFKEIVKYLKKGDCLVLNNTKVIPARLMGERIIEKTPLAPGHSYGKEGTPIELLLLKRKPDDVWETLVRPGKKAKVGTKISFGDGKLIGEIIDVVEEGNRLVKFTYQGIFEEILDELGQMPLPPYITHELADKNRYQTVYAKHEGSAAAPTAGLHFTNELLKQIEDMGVVIANVTLHVGLGTFRPVKEDDILDHHMHSEVYQVEESEAKKINDAKRAGGRIICVGTTSCRTIESAANEDGFVQAKSGATEIFIYPGYKFKVLNCLITNFHLPESTLLMLVSALASREHIIAAYEEAVKERYRFFSFGDAMFITDNIIETKDTF.

The protein belongs to the QueA family. In terms of assembly, monomer.

The protein resides in the cytoplasm. It carries out the reaction 7-aminomethyl-7-carbaguanosine(34) in tRNA + S-adenosyl-L-methionine = epoxyqueuosine(34) in tRNA + adenine + L-methionine + 2 H(+). It functions in the pathway tRNA modification; tRNA-queuosine biosynthesis. In terms of biological role, transfers and isomerizes the ribose moiety from AdoMet to the 7-aminomethyl group of 7-deazaguanine (preQ1-tRNA) to give epoxyqueuosine (oQ-tRNA). The sequence is that of S-adenosylmethionine:tRNA ribosyltransferase-isomerase from Lachnoclostridium phytofermentans (strain ATCC 700394 / DSM 18823 / ISDg) (Clostridium phytofermentans).